The following is a 360-amino-acid chain: Chorismate synthase (360 aa).

Residues 36–60 (LSEDDIQPDLDRRKPGTSKYTTPRR) form a disordered region. NADP(+) is bound at residue arginine 48. Residues 125-127 (RSS), 246-247 (NA), glycine 286, 301-305 (KPTSS), and arginine 327 contribute to the FMN site.

The protein belongs to the chorismate synthase family. Homotetramer. FMNH2 is required as a cofactor.

It carries out the reaction 5-O-(1-carboxyvinyl)-3-phosphoshikimate = chorismate + phosphate. It participates in metabolic intermediate biosynthesis; chorismate biosynthesis; chorismate from D-erythrose 4-phosphate and phosphoenolpyruvate: step 7/7. In terms of biological role, catalyzes the anti-1,4-elimination of the C-3 phosphate and the C-6 proR hydrogen from 5-enolpyruvylshikimate-3-phosphate (EPSP) to yield chorismate, which is the branch point compound that serves as the starting substrate for the three terminal pathways of aromatic amino acid biosynthesis. This reaction introduces a second double bond into the aromatic ring system. In Histophilus somni (strain 129Pt) (Haemophilus somnus), this protein is Chorismate synthase.